A 423-amino-acid chain; its full sequence is Tyrosine--tRNA ligase (423 aa).

L-tyrosine is bound at residue Y35. Positions 40–49 (PTAPSLHAGH) match the 'HIGH' region motif. Y170 and Q174 together coordinate L-tyrosine. The 'KMSKS' region signature appears at 230-234 (KFGKS). Residue K233 participates in ATP binding. The 58-residue stretch at 355-412 (DLITDLLVATGLSASKGAARRTIAEGGVSVNNVKIDSDEWTPQASDFLHGRWLVLRRG) folds into the S4 RNA-binding domain.

This sequence belongs to the class-I aminoacyl-tRNA synthetase family. TyrS type 1 subfamily. As to quaternary structure, homodimer.

Its subcellular location is the cytoplasm. The enzyme catalyses tRNA(Tyr) + L-tyrosine + ATP = L-tyrosyl-tRNA(Tyr) + AMP + diphosphate + H(+). Its function is as follows. Catalyzes the attachment of tyrosine to tRNA(Tyr) in a two-step reaction: tyrosine is first activated by ATP to form Tyr-AMP and then transferred to the acceptor end of tRNA(Tyr). The polypeptide is Tyrosine--tRNA ligase (Mycobacterium sp. (strain JLS)).